Reading from the N-terminus, the 473-residue chain is Maltose fermentation regulatory protein MAL13 (473 aa).

Positions 13–39 form a DNA-binding region, zn(2)-C6 fungal-type; it reads CDCCRIRRVKCDGKRPCSSCLQNSLDC. The Nuclear localization signal signature appears at 46-54; it reads RKRGPKSIR.

This sequence belongs to the MAL13 family.

Its subcellular location is the nucleus. In terms of biological role, regulates the coordinate transcription of structural MAL1S (maltase) and AGT1 (maltose permease) genes. The polypeptide is Maltose fermentation regulatory protein MAL13 (MAL13) (Saccharomyces cerevisiae (strain ATCC 204508 / S288c) (Baker's yeast)).